Reading from the N-terminus, the 205-residue chain is MKLGIDENYFELEENLLKEGYRFICGVDEAGRGPLAGPVFAAAVIMDREIIIEGVRDSKKLTPKKREKLFEEIVKESITYSVAMVDNKTIDEININNATFLAMKNAIEALELVPDIVLVDGYEIPDLNLPQKALIKGDRKSYSIACASILAKVSRDRFITQISSLYPVYKFEKHKGYGTKEHIRLILEYGPCEIHRKSFLKNILR.

The 184-residue stretch at 22–205 (RFICGVDEAG…RKSFLKNILR (184 aa)) folds into the RNase H type-2 domain. A divalent metal cation is bound by residues D28, E29, and D120.

Belongs to the RNase HII family. Mn(2+) is required as a cofactor. Requires Mg(2+) as cofactor.

Its subcellular location is the cytoplasm. It catalyses the reaction Endonucleolytic cleavage to 5'-phosphomonoester.. In terms of biological role, endonuclease that specifically degrades the RNA of RNA-DNA hybrids. This Caldicellulosiruptor saccharolyticus (strain ATCC 43494 / DSM 8903 / Tp8T 6331) protein is Ribonuclease HII.